The primary structure comprises 341 residues: S-adenosylmethionine:tRNA ribosyltransferase-isomerase (341 aa).

It belongs to the QueA family. As to quaternary structure, monomer.

The protein resides in the cytoplasm. It carries out the reaction 7-aminomethyl-7-carbaguanosine(34) in tRNA + S-adenosyl-L-methionine = epoxyqueuosine(34) in tRNA + adenine + L-methionine + 2 H(+). It functions in the pathway tRNA modification; tRNA-queuosine biosynthesis. Its function is as follows. Transfers and isomerizes the ribose moiety from AdoMet to the 7-aminomethyl group of 7-deazaguanine (preQ1-tRNA) to give epoxyqueuosine (oQ-tRNA). In Desulforamulus reducens (strain ATCC BAA-1160 / DSM 100696 / MI-1) (Desulfotomaculum reducens), this protein is S-adenosylmethionine:tRNA ribosyltransferase-isomerase.